The chain runs to 205 residues: NADH-quinone oxidoreductase subunit J (205 aa).

5 helical membrane-spanning segments follow: residues 1 to 21, 26 to 46, 54 to 74, 89 to 109, and 142 to 162; these read MPIFFYLFATLITISSVCVVL, VYSVLWLIFAFINGAGLMILL, MLIVIYVGAVAVLFLFVIMML, LALSIFIALIMFADLVIIILL, and FMLPFQMAGLILFVAMIACIT.

This sequence belongs to the complex I subunit 6 family.

Its subcellular location is the cell membrane. It carries out the reaction a quinone + NADH + 5 H(+)(in) = a quinol + NAD(+) + 4 H(+)(out). In terms of biological role, NDH-1 shuttles electrons from NADH, via FMN and iron-sulfur (Fe-S) centers, to quinones in the respiratory chain. Couples the redox reaction to proton translocation (for every two electrons transferred, four hydrogen ions are translocated across the cytoplasmic membrane), and thus conserves the redox energy in a proton gradient. The protein is NADH-quinone oxidoreductase subunit J (nuoJ) of Rickettsia conorii (strain ATCC VR-613 / Malish 7).